A 157-amino-acid chain; its full sequence is Endoribonuclease YbeY (157 aa).

Zn(2+)-binding residues include histidine 111, histidine 115, and histidine 121. Positions 136-157 (ELLAELGHPDPYADDETDSITH) are disordered. Residues 147–157 (YADDETDSITH) show a composition bias toward acidic residues.

The protein belongs to the endoribonuclease YbeY family. The cofactor is Zn(2+).

The protein resides in the cytoplasm. In terms of biological role, single strand-specific metallo-endoribonuclease involved in late-stage 70S ribosome quality control and in maturation of the 3' terminus of the 16S rRNA. This is Endoribonuclease YbeY from Pseudomonas putida (strain ATCC 700007 / DSM 6899 / JCM 31910 / BCRC 17059 / LMG 24140 / F1).